A 180-amino-acid chain; its full sequence is Putative adenylate kinase (180 aa).

5 residues coordinate ATP: Gly10, Gly12, Lys13, Thr14, and Thr15. An NMP region spans residues 30-50 (NLRDFALEKGCGREVDGEVEV). An LID region spans residues 99–109 (ERGYSKEKIGE). ATP is bound by residues Arg100 and Lys138.

This sequence belongs to the adenylate kinase family. AK6 subfamily. Interacts with uS11. Not a structural component of 40S pre-ribosomes, but transiently interacts with them by binding to uS11.

The catalysed reaction is AMP + ATP = 2 ADP. It carries out the reaction ATP + H2O = ADP + phosphate + H(+). In terms of biological role, broad-specificity nucleoside monophosphate (NMP) kinase that catalyzes the reversible transfer of the terminal phosphate group between nucleoside triphosphates and monophosphates. Also has ATPase activity. Involved in the late maturation steps of the 30S ribosomal particles, specifically 16S rRNA maturation. While NMP activity is not required for ribosome maturation, ATPase activity is. Associates transiently with small ribosomal subunit protein uS11. ATP hydrolysis breaks the interaction with uS11. May temporarily remove uS11 from the ribosome to enable a conformational change of the ribosomal RNA that is needed for the final maturation step of the small ribosomal subunit. This Pyrococcus abyssi (strain GE5 / Orsay) protein is Putative adenylate kinase.